The sequence spans 252 residues: Probable endonuclease 4 (252 aa).

Residues H56, H96, E129, D162, H165, H191, D204, H206, and E233 each coordinate Zn(2+).

The protein belongs to the AP endonuclease 2 family. Zn(2+) is required as a cofactor.

The enzyme catalyses Endonucleolytic cleavage to 5'-phosphooligonucleotide end-products.. Its function is as follows. Endonuclease IV plays a role in DNA repair. It cleaves phosphodiester bonds at apurinic or apyrimidinic (AP) sites, generating a 3'-hydroxyl group and a 5'-terminal sugar phosphate. The polypeptide is Probable endonuclease 4 (Mycobacterium leprae (strain Br4923)).